The chain runs to 141 residues: Hemoglobin subunit alpha (141 aa).

Residues 1-141 (VLSEADKSNV…VSTVLTSKYR (141 aa)) enclose the Globin domain. His-58 contacts O2. Position 87 (His-87) interacts with heme b.

This sequence belongs to the globin family. Heterotetramer of two alpha chains and two beta chains. When oxygenated in vitro, exists virtually only in polymeric form. When deoxygenated, forms tetramers, octamers and larger polymers. As to expression, red blood cells.

In terms of biological role, involved in oxygen transport from the lung to the various peripheral tissues. The chain is Hemoglobin subunit alpha from Paleosuchus palpebrosus (Cuvier's smooth-fronted caiman).